A 91-amino-acid chain; its full sequence is uncharacterized protein (91 aa).

The next 3 membrane-spanning stretches (helical) occupy residues 9–29, 30–50, and 67–87; these read LIHA…YTAG, LGIF…VIFG, and WLGC…VLKF.

Its subcellular location is the cell membrane. This is an uncharacterized protein from Methanocaldococcus jannaschii (strain ATCC 43067 / DSM 2661 / JAL-1 / JCM 10045 / NBRC 100440) (Methanococcus jannaschii).